We begin with the raw amino-acid sequence, 351 residues long: Amylovoran biosynthesis glycosyltransferase AmsD (351 aa).

Belongs to the glycosyltransferase group 1 family. Glycosyltransferase 4 subfamily.

Its pathway is glycan metabolism; exopolysaccharide biosynthesis. In terms of biological role, involved in the biosynthesis of amylovoran which functions as a virulence factor. May be involved in the formation of galactose alpha-1,6 linkages in amylovoran. The sequence is that of Amylovoran biosynthesis glycosyltransferase AmsD (amsD) from Erwinia amylovora (Fire blight bacteria).